We begin with the raw amino-acid sequence, 576 residues long: K(+)/H(+) antiporter NhaP2 (576 aa).

Helical transmembrane passes span 6–26, 34–54, 58–78, 87–107, 109–129, 163–183, 185–205, 219–239, 242–262, 271–291, 299–319, 335–355, and 359–379; these read INSFFLIGALLTAVSVLLSPM, ILLIFLAVGILAGEDGPGGIL, YSTAYLVSNLALAIILLDGGM, VALWPALSLATFGVAITTSIT, MMAAWLFDLHWLQGLLVGAIV, PMAVFLTVTLIAILANVDTEM, FSFMFISFIKQFGLGICLGLG, LADGLYSILVLSGGLIIYAAS, LGGSGILSIYLVGLFLGNKPT, VLDGMTWVSQIGMFLVLGLLL, ILIPGFALAFGMILFARPVAV, WFISWVGLRGAVPIILAVFPM, and LPGAQLYFNLAFFVVLVSLLV. In terms of domain architecture, RCK C-terminal spans 405 to 486; the sequence is SGVEIYPSSE…LEALSNLFSQ (82 aa).

It belongs to the monovalent cation:proton antiporter 1 (CPA1) transporter (TC 2.A.36) family. NhaP2 subfamily.

The protein resides in the cell inner membrane. The catalysed reaction is K(+)(in) + H(+)(out) = K(+)(out) + H(+)(in). Its function is as follows. K(+)/H(+) antiporter that extrudes potassium in exchange for external protons and maintains the internal concentration of potassium under toxic levels. This is K(+)/H(+) antiporter NhaP2 from Shewanella baltica (strain OS195).